The sequence spans 448 residues: Na(+)-malate symporter (448 aa).

Helical transmembrane passes span 31 to 51, 60 to 80, 86 to 106, 123 to 143, 153 to 173, 182 to 202, 214 to 234, 276 to 293, 297 to 319, 333 to 353, and 359 to 379; these read IGVI…LAAY, LGGF…GQRI, IGGP…YNVL, FLYF…NRIV, VPLV…GFIF, FFVV…PLSI, VFVS…IICA, LMGA…FGGL, FIFI…ANIL, FISS…FIPL, and VISI…IGSG.

It belongs to the 2-hydroxycarboxylate transporter (2-HCT) (TC 2.A.24) family.

It localises to the cell membrane. Its function is as follows. Acts as a Na(+)-malate symporter, as it catalyzes malate-dependent uptake of Na(+) and Na(+)-dependent uptake of malate. This chain is Na(+)-malate symporter, found in Bacillus subtilis (strain 168).